A 256-amino-acid polypeptide reads, in one-letter code: Small ribosomal subunit protein eS1 (256 aa).

N-acetylalanine; partial is present on A2.

The protein belongs to the eukaryotic ribosomal protein eS1 family. As to quaternary structure, component of the small ribosomal subunit. Mature ribosomes consist of a small (40S) and a large (60S) subunit. The 40S subunit contains about 33 different proteins and 1 molecule of RNA (18S). The 60S subunit contains about 49 different proteins and 3 molecules of RNA (25S, 5.8S and 5S).

It is found in the cytoplasm. This Coprinopsis cinerea (strain Okayama-7 / 130 / ATCC MYA-4618 / FGSC 9003) (Inky cap fungus) protein is Small ribosomal subunit protein eS1.